The following is a 290-amino-acid chain: ATP synthase gamma chain (290 aa).

Belongs to the ATPase gamma chain family. F-type ATPases have 2 components, CF(1) - the catalytic core - and CF(0) - the membrane proton channel. CF(1) has five subunits: alpha(3), beta(3), gamma(1), delta(1), epsilon(1). CF(0) has three main subunits: a, b and c.

It localises to the cell inner membrane. Its function is as follows. Produces ATP from ADP in the presence of a proton gradient across the membrane. The gamma chain is believed to be important in regulating ATPase activity and the flow of protons through the CF(0) complex. The sequence is that of ATP synthase gamma chain from Anaeromyxobacter sp. (strain K).